The following is a 711-amino-acid chain: Mitochondrial intermediate peptidase (711 aa).

The transit peptide at 1-33 directs the protein to the mitochondrion; the sequence is MLLAAGARYARRLCGRGAAAALQGRTGRSCARD. N6-acetyllysine is present on Lys-124. His-493 lines the Zn(2+) pocket. Glu-494 is a catalytic residue. The Zn(2+) site is built by His-497 and His-500.

This sequence belongs to the peptidase M3 family. As to quaternary structure, monomer. It depends on Zn(2+) as a cofactor.

The protein localises to the mitochondrion matrix. It carries out the reaction Release of an N-terminal octapeptide as second stage of processing of some proteins imported into the mitochondrion.. With respect to regulation, activity is divalent cation-dependent. It is stimulated by manganese, magnesium or calcium ions and reversibly inhibited by zinc, cobalt and iron. Functionally, cleaves proteins, imported into the mitochondrion, to their mature size. This chain is Mitochondrial intermediate peptidase (Mipep), found in Mus musculus (Mouse).